The primary structure comprises 494 residues: Ribitol 5-phosphate transferase FKRP (494 aa).

At 1–6 (MRLTRC) the chain is on the cytoplasmic side. A helical membrane pass occupies residues 7 to 29 (WAALAAAIILNLLVFFYVSWLQH). Residues 30–494 (QPRNSRARGP…NPALLSLTGG (465 aa)) lie on the Lumenal side of the membrane. C168 and C191 are oxidised to a cystine. N-linked (GlcNAc...) asparagine glycans are attached at residues N172 and N209. Zn(2+) contacts are provided by C289, C296, C317, and C318. A zinc finger loop region spans residues 289–318 (CSKESARCFGTVAGDTPAYLYEGRWTPPCC). Residues G345 and R352 each coordinate CDP-L-ribitol. 3 CDP-L-ribitol regions span residues 359–364 (WDYDVD), 437–438 (QD), and 480–482 (NPE). The Mg(2+) site is built by D360, D362, and D364.

It belongs to the LicD transferase family. In terms of assembly, homodimer; disulfide-linked. Forms a complex composed of FKRP, FKTN/fukutin, and RXYLT1/TMEM5. Also exists as large multimeric protein complexes. May interact with the dystrophin-glycoprotein complex (DGC). Post-translationally, N-glycosylated. Expressed in the retina, specifically in the inner segments of the photoreceptors, the outer plexiform layers, inner nuclear layers, and ganglion cell layers (at protein level). Expressed at highest levels in brain, lung, heart, kidney and liver.

It is found in the golgi apparatus membrane. It localises to the secreted. The protein localises to the cell membrane. The protein resides in the sarcolemma. Its subcellular location is the rough endoplasmic reticulum. It is found in the cytoplasm. It catalyses the reaction 3-O-[Rib-ol-P-3-beta-D-GalNAc-(1-&gt;3)-beta-D-GlcNAc-(1-&gt;4)-(O-6-P-alpha-D-Man)]-Thr-[protein] + CDP-L-ribitol = 3-O-[Rib-ol-P-Rib-ol-P-3-beta-D-GalNAc-(1-&gt;3)-beta-D-GlcNAc-(1-&gt;4)-(O-6-P-alpha-D-Man)]-Thr-[protein] + CMP + H(+). It functions in the pathway protein modification; protein glycosylation. Its function is as follows. Catalyzes the transfer of CDP-ribitol to ribitol 5-phosphate previously attached by FKTN/fukutin of to the phosphorylated O-mannosyl trisaccharide (N-acetylgalactosamine-beta-3-N-acetylglucosamine-beta-4-(phosphate-6-)mannose), a carbohydrate structure present in alpha-dystroglycan (DAG1). This constitutes the second step in the formation of the ribose 5-phosphate tandem repeat which links the phosphorylated O-mannosyl trisaccharide to the ligand binding moiety composed of repeats of 3-xylosyl-alpha-1,3-glucuronic acid-beta-1. The sequence is that of Ribitol 5-phosphate transferase FKRP from Mus musculus (Mouse).